A 35-amino-acid polypeptide reads, in one-letter code: Phospholipase A2 bitanarin (35 aa).

Belongs to the phospholipase A2 family. Group II subfamily. In terms of assembly, monomer. Ca(2+) serves as cofactor. Post-translationally, contains 14 disulfide bonds. In terms of tissue distribution, expressed by the venom gland.

It is found in the secreted. The enzyme catalyses a 1,2-diacyl-sn-glycero-3-phosphocholine + H2O = a 1-acyl-sn-glycero-3-phosphocholine + a fatty acid + H(+). In terms of biological role, snake venom phospholipase A2 (PLA2) that is the first competitive blocker of nicotinic acetylcholine receptors (nAChRs). Competes with alpha-bungarotoxin for binding to nAChRs and acetylcholine binding proteins (AChBPs) and blocks acetylcholine-elicited current. PLA2 catalyzes the calcium-dependent hydrolysis of the 2-acyl groups in 3-sn-phosphoglycerides. This is Phospholipase A2 bitanarin from Bitis arietans (African puff adder).